Here is a 351-residue protein sequence, read N- to C-terminus: Phosphate acyltransferase (351 aa).

Belongs to the PlsX family. Homodimer. Probably interacts with PlsY.

Its subcellular location is the cytoplasm. It carries out the reaction a fatty acyl-[ACP] + phosphate = an acyl phosphate + holo-[ACP]. Its pathway is lipid metabolism; phospholipid metabolism. Functionally, catalyzes the reversible formation of acyl-phosphate (acyl-PO(4)) from acyl-[acyl-carrier-protein] (acyl-ACP). This enzyme utilizes acyl-ACP as fatty acyl donor, but not acyl-CoA. The protein is Phosphate acyltransferase of Maricaulis maris (strain MCS10) (Caulobacter maris).